The primary structure comprises 182 residues: Ribosome-recycling factor (182 aa).

The protein belongs to the RRF family.

The protein resides in the cytoplasm. Functionally, responsible for the release of ribosomes from messenger RNA at the termination of protein biosynthesis. May increase the efficiency of translation by recycling ribosomes from one round of translation to another. The polypeptide is Ribosome-recycling factor (Prochlorococcus marinus (strain MIT 9215)).